The sequence spans 479 residues: Endoglucanase 20 (479 aa).

The first 21 residues, 1–21 (MGKLLVLMLVGMFLAFESLEA), serve as a signal peptide directing secretion. N-linked (GlcNAc...) asparagine glycosylation is present at Asn-29. Residue Asp-76 is the Nucleophile of the active site. His-398 is an active-site residue. Asn-442 is a glycosylation site (N-linked (GlcNAc...) asparagine). Catalysis depends on residues Asp-449 and Glu-458.

Belongs to the glycosyl hydrolase 9 (cellulase E) family.

It is found in the secreted. The catalysed reaction is Endohydrolysis of (1-&gt;4)-beta-D-glucosidic linkages in cellulose, lichenin and cereal beta-D-glucans.. The polypeptide is Endoglucanase 20 (Arabidopsis thaliana (Mouse-ear cress)).